The primary structure comprises 287 residues: 4-hydroxybenzoate octaprenyltransferase (287 aa).

The next 8 membrane-spanning stretches (helical) occupy residues 19–39 (PIGS…AADG), 43–63 (LHVL…GCVI), 94–116 (LALA…PLVI), 135–155 (FFAI…PMGF), 160–180 (GEVP…AVAY), 207–227 (FDVA…GWVG), 234–254 (ALYF…YTLI), and 269–286 (NNWL…DYLI).

The protein belongs to the UbiA prenyltransferase family. Requires Mg(2+) as cofactor.

Its subcellular location is the cell inner membrane. It carries out the reaction all-trans-octaprenyl diphosphate + 4-hydroxybenzoate = 4-hydroxy-3-(all-trans-octaprenyl)benzoate + diphosphate. The protein operates within cofactor biosynthesis; ubiquinone biosynthesis. Functionally, catalyzes the prenylation of para-hydroxybenzoate (PHB) with an all-trans polyprenyl group. Mediates the second step in the final reaction sequence of ubiquinone-8 (UQ-8) biosynthesis, which is the condensation of the polyisoprenoid side chain with PHB, generating the first membrane-bound Q intermediate 3-octaprenyl-4-hydroxybenzoate. The protein is 4-hydroxybenzoate octaprenyltransferase of Azoarcus sp. (strain BH72).